The sequence spans 290 residues: RWD domain-containing protein 2B (290 aa).

The RWD domain occupies 12–136; it reads SELDLLASMF…EWVKEHAFDY (125 aa).

The chain is RWD domain-containing protein 2B (Rwdd2b) from Mus musculus (Mouse).